Reading from the N-terminus, the 505-residue chain is Mannosylglucosyl-3-phosphoglycerate synthase (505 aa).

In terms of assembly, monomer in solution.

The catalysed reaction is (2R)-2-O-(alpha-D-glucopyranosyl)-3-phospho-glycerate + GDP-alpha-D-mannose = (2R)-2-O-[alpha-D-mannopyranosyl-(1-&gt;2)-alpha-D-glucopyranosyl]-3-phospho-glycerate + GDP + H(+). Its activity is regulated as follows. Not strictly dependent on divalent cations, but the presence of Mn(2+), Ca(2+), Mg(2+) or Co(2+) stimulates activity. In terms of biological role, involved in the biosynthesis of the compatible solute mannosylglucosylglycerate through a phosphorylating pathway. Catalyzes the conversion of glucosyl-3-phosphoglycerate (GPG) to mannosylglucosyl-3-phosphoglycerate (MGPG). This Petrotoga mobilis (strain DSM 10674 / SJ95) protein is Mannosylglucosyl-3-phosphoglycerate synthase.